Here is a 292-residue protein sequence, read N- to C-terminus: MQLENIEILENHSLAPYAYTQAGGLVDYLAIPKSIHELKVLVNWAKELGMPVQVFGRLSNLIVRNGGLRGLSILLHDLRDVVVDQNKIVASAGADLIWVTEQAFEHGLSGLEWGAGIPGSVGGAVFMNAGAYGGQVDMVVSSVTALMPDGTLQNFEKKALEFGYRKSVFQSNGGIIISATFELQPDSCTAIRTRMDENNFKRANKQPLNYPSNGSVFKRPEGYFAGKLIMDSKLQGVRRGGVEVSKKHAGFMVNIAHGTGNDYEDLIHYVQKTVYEKFGVHLETEVRIMGER.

The FAD-binding PCMH-type domain occupies 21-186 (QAGGLVDYLA…ISATFELQPD (166 aa)). Arginine 165 is an active-site residue. Serine 215 serves as the catalytic Proton donor. Residue glutamate 285 is part of the active site.

This sequence belongs to the MurB family. FAD serves as cofactor.

The protein resides in the cytoplasm. The catalysed reaction is UDP-N-acetyl-alpha-D-muramate + NADP(+) = UDP-N-acetyl-3-O-(1-carboxyvinyl)-alpha-D-glucosamine + NADPH + H(+). Its pathway is cell wall biogenesis; peptidoglycan biosynthesis. In terms of biological role, cell wall formation. This is UDP-N-acetylenolpyruvoylglucosamine reductase from Leuconostoc mesenteroides subsp. mesenteroides (strain ATCC 8293 / DSM 20343 / BCRC 11652 / CCM 1803 / JCM 6124 / NCDO 523 / NBRC 100496 / NCIMB 8023 / NCTC 12954 / NRRL B-1118 / 37Y).